A 223-amino-acid chain; its full sequence is MHQRLATLAAARLYLCTDARRERGDLAEFADAALAGGVDVIQLRDKGSPGEQRFGPLEARDELAACEILADAARRHGALFAVNDRADIARAAGADVLHLGQGDLPLDVARAFVGPDVLLGLSSHDRDQMTAAAAGPADYFCVGPCWPTPTKPGRAAPGLALVRAAAELRTGKPWFAIGGIDAQRLPEVLDAGARRVVVVRAITAADDPAAAARRLSSALAAAR.

4-amino-2-methyl-5-(diphosphooxymethyl)pyrimidine contacts are provided by residues 42–46 (QLRDK) and Asn-83. Residues Asp-84 and Asp-103 each coordinate Mg(2+). Residue Ser-122 participates in 4-amino-2-methyl-5-(diphosphooxymethyl)pyrimidine binding. Position 148-150 (148-150 (TPT)) interacts with 2-[(2R,5Z)-2-carboxy-4-methylthiazol-5(2H)-ylidene]ethyl phosphate. Residue Lys-151 participates in 4-amino-2-methyl-5-(diphosphooxymethyl)pyrimidine binding. Gly-179 is a binding site for 2-[(2R,5Z)-2-carboxy-4-methylthiazol-5(2H)-ylidene]ethyl phosphate.

Belongs to the thiamine-phosphate synthase family. The cofactor is Mg(2+).

It catalyses the reaction 2-[(2R,5Z)-2-carboxy-4-methylthiazol-5(2H)-ylidene]ethyl phosphate + 4-amino-2-methyl-5-(diphosphooxymethyl)pyrimidine + 2 H(+) = thiamine phosphate + CO2 + diphosphate. It carries out the reaction 2-(2-carboxy-4-methylthiazol-5-yl)ethyl phosphate + 4-amino-2-methyl-5-(diphosphooxymethyl)pyrimidine + 2 H(+) = thiamine phosphate + CO2 + diphosphate. The catalysed reaction is 4-methyl-5-(2-phosphooxyethyl)-thiazole + 4-amino-2-methyl-5-(diphosphooxymethyl)pyrimidine + H(+) = thiamine phosphate + diphosphate. It participates in cofactor biosynthesis; thiamine diphosphate biosynthesis; thiamine phosphate from 4-amino-2-methyl-5-diphosphomethylpyrimidine and 4-methyl-5-(2-phosphoethyl)-thiazole: step 1/1. In terms of biological role, condenses 4-methyl-5-(beta-hydroxyethyl)thiazole monophosphate (THZ-P) and 2-methyl-4-amino-5-hydroxymethyl pyrimidine pyrophosphate (HMP-PP) to form thiamine monophosphate (TMP). The protein is Thiamine-phosphate synthase of Mycobacterium avium (strain 104).